A 137-amino-acid polypeptide reads, in one-letter code: Cellular retinoic acid-binding protein 1 (137 aa).

Positions 21-31 match the Nuclear localization signal motif; it reads KALGVNAMLRK. All-trans-retinoate is bound at residue 132–134; the sequence is RIY.

This sequence belongs to the calycin superfamily. Fatty-acid binding protein (FABP) family.

It localises to the cytoplasm. Its function is as follows. Cytosolic CRABPs may regulate the access of retinoic acid to the nuclear retinoic acid receptors. This chain is Cellular retinoic acid-binding protein 1 (Crabp1), found in Mus musculus (Mouse).